The sequence spans 279 residues: Proteasome subunit beta (279 aa).

A propeptide spans 1-53 (MSGTAEFPGRIPAPYLEVGSSSFVELLGSVAPELLPGRRPLPPGDMGDAAPHG) (removed in mature form; by autocatalysis). Thr54 functions as the Nucleophile in the catalytic mechanism.

It belongs to the peptidase T1B family. In terms of assembly, the 20S proteasome core is composed of 14 alpha and 14 beta subunits that assemble into four stacked heptameric rings, resulting in a barrel-shaped structure. The two inner rings, each composed of seven catalytic beta subunits, are sandwiched by two outer rings, each composed of seven alpha subunits. The catalytic chamber with the active sites is on the inside of the barrel. Has a gated structure, the ends of the cylinder being occluded by the N-termini of the alpha-subunits. Is capped by the proteasome-associated ATPase, ARC.

Its subcellular location is the cytoplasm. The catalysed reaction is Cleavage of peptide bonds with very broad specificity.. The protein operates within protein degradation; proteasomal Pup-dependent pathway. Its activity is regulated as follows. The formation of the proteasomal ATPase ARC-20S proteasome complex, likely via the docking of the C-termini of ARC into the intersubunit pockets in the alpha-rings, may trigger opening of the gate for substrate entry. Interconversion between the open-gate and close-gate conformations leads to a dynamic regulation of the 20S proteasome proteolysis activity. Its function is as follows. Component of the proteasome core, a large protease complex with broad specificity involved in protein degradation. In Stackebrandtia nassauensis (strain DSM 44728 / CIP 108903 / NRRL B-16338 / NBRC 102104 / LLR-40K-21), this protein is Proteasome subunit beta.